Consider the following 866-residue polypeptide: DNA mismatch repair protein MutS (866 aa).

618–625 (GPNMSGKS) contacts ATP.

This sequence belongs to the DNA mismatch repair MutS family.

This protein is involved in the repair of mismatches in DNA. It is possible that it carries out the mismatch recognition step. This protein has a weak ATPase activity. In Flavobacterium psychrophilum (strain ATCC 49511 / DSM 21280 / CIP 103535 / JIP02/86), this protein is DNA mismatch repair protein MutS.